Consider the following 148-residue polypeptide: Arginine repressor (148 aa).

This sequence belongs to the ArgR family.

The protein resides in the cytoplasm. It functions in the pathway amino-acid biosynthesis; L-arginine biosynthesis [regulation]. Regulates arginine biosynthesis genes. The polypeptide is Arginine repressor (Chlorobium luteolum (strain DSM 273 / BCRC 81028 / 2530) (Pelodictyon luteolum)).